Reading from the N-terminus, the 208-residue chain is Intraflagellar transport protein 43 homolog (208 aa).

The residue at position 1 (Met-1) is an N-acetylmethionine. Residues 18–65 (SRAKMGRRAQQESAQAENHLNGKNSSLTLTGETSSAKLPRCRQGGWAG) form a disordered region. Over residues 28–53 (QESAQAENHLNGKNSSLTLTGETSSA) the composition is skewed to polar residues. Ser-78 carries the post-translational modification Phosphoserine.

It belongs to the IFT43 family. In terms of assembly, component of the IFT complex A (IFT-A) complex. IFT-A complex is divided into a core subcomplex composed of IFT122:IFT140:WDR19 which is associated with TULP3 and a peripheral subcomplex composed of IFT43:WDR35:TTC21B. Interacts directy with IFT122, WDR35 and TTC21B. As to expression, expressed in the retina, predominantly in the photoreceptor outer segment.

It localises to the cytoplasm. It is found in the cytoskeleton. The protein localises to the cell projection. The protein resides in the cilium. Its function is as follows. As a component of IFT complex A (IFT-A), a complex required for retrograde ciliary transport and entry into cilia of G protein-coupled receptors (GPCRs), it is involved in ciliogenesis. Involved in retrograde ciliary transport along microtubules from the ciliary tip to the base. The protein is Intraflagellar transport protein 43 homolog of Homo sapiens (Human).